A 349-amino-acid chain; its full sequence is Green-sensitive opsin-2 (349 aa).

Over 1 to 36 (MNGTEGNNFYVPLSNRTGLVRSPFEYPQYYLAEPWQ) the chain is Extracellular. N-linked (GlcNAc...) asparagine glycosylation is found at N2 and N15. The chain crosses the membrane as a helical span at residues 37–61 (FKLLAVYMFFLICLGLPINGLTLIC). Topologically, residues 62 to 73 (TAQHKKLRQPLN) are cytoplasmic. A helical membrane pass occupies residues 74-99 (FILVNLAVAGAIMVCFGFTVTFYTAI). At 100 to 113 (NGYFALGPTGCAVE) the chain is on the extracellular side. C110 and C187 are joined by a disulfide. Residues 114 to 133 (GFMATLGGEVALWSLVVLAI) form a helical membrane-spanning segment. At 134 to 152 (ERYIVVCKPMGSFKFSSTH) the chain is on the cytoplasmic side. Residues 153-176 (ASAGIAFTWVMAMACAAPPLVGWS) form a helical membrane-spanning segment. Over 177-202 (RYIPEGIQCSCGPDYYTLNPEYNNES) the chain is Extracellular. The helical transmembrane segment at 203–230 (YVLYMFICHFILPVTIIFFTYGRLVCTV) threads the bilayer. Residues 231–252 (KAAAAQQQDSASTQKAEREVTK) lie on the Cytoplasmic side of the membrane. The chain crosses the membrane as a helical span at residues 253 to 276 (MVILMVLGFLVAWTPYATVAAWIF). Residues 277–284 (FNKGAAFS) are Extracellular-facing. Residues 285–309 (AQFMAIPAFFSKTSALYNPVIYVLL) form a helical membrane-spanning segment. An N6-(retinylidene)lysine modification is found at K296. At 310–349 (NKQFRSCMLTTLFCGKNPLGDEESSTVSTSKTEVSSVSPA) the chain is on the cytoplasmic side. The segment at 329-349 (GDEESSTVSTSKTEVSSVSPA) is disordered. Residues 334 to 349 (STVSTSKTEVSSVSPA) show a composition bias toward low complexity.

This sequence belongs to the G-protein coupled receptor 1 family. Opsin subfamily. In terms of processing, phosphorylated on some or all of the serine and threonine residues present in the C-terminal region. The color pigments are found in the cone photoreceptor cells.

It localises to the membrane. In terms of biological role, visual pigments are the light-absorbing molecules that mediate vision. They consist of an apoprotein, opsin, covalently linked to cis-retinal. The sequence is that of Green-sensitive opsin-2 from Carassius auratus (Goldfish).